We begin with the raw amino-acid sequence, 254 residues long: MAKMQLSIFIAVVALIVCSASAKTASPPAPVLPPTPAPAPAPENVNLTELLSVAGPFHTFLDYLLSTGVIETFQNQANNTEEGITIFVPKDDAFKAQKNPPLSNLTKDQLKQLVLFHALPHYYSLSEFKNLSQSGPVSTFAGGQYSLKFTDVSGTVRIDSLWTRTKVSSSVFSTDPVAVYQVNRVLLPEAIFGTDVPPMPAPAPAPIVSAPSDSPSVADSEGASSPKSSHKNSGQKLLLAPISMVISGLVALFL.

The signal sequence occupies residues 1–22 (MAKMQLSIFIAVVALIVCSASA). Residues 44–186 (NVNLTELLSV…VAVYQVNRVL (143 aa)) enclose the FAS1 domain. Asparagine 46, asparagine 78, asparagine 104, and asparagine 130 each carry an N-linked (GlcNAc...) asparagine glycan. The segment at 203-233 (APAPIVSAPSDSPSVADSEGASSPKSSHKNS) is disordered. The span at 206-220 (PIVSAPSDSPSVADS) shows a compositional bias: low complexity. Over residues 222–233 (GASSPKSSHKNS) the composition is skewed to polar residues. Asparagine 232 is lipidated: GPI-anchor amidated asparagine. Residues 233 to 254 (SGQKLLLAPISMVISGLVALFL) constitute a propeptide, removed in mature form.

It belongs to the fasciclin-like AGP family.

The protein resides in the cell membrane. Its function is as follows. May be a cell surface adhesion protein. This is Fasciclin-like arabinogalactan protein 7 (FLA7) from Arabidopsis thaliana (Mouse-ear cress).